A 72-amino-acid polypeptide reads, in one-letter code: UPF0154 protein LBA1278 (72 aa).

The helical transmembrane segment at 3–23 (LGLAIFLIIIALLVGATAGFY) threads the bilayer.

It belongs to the UPF0154 family.

The protein localises to the cell membrane. In Lactobacillus acidophilus (strain ATCC 700396 / NCK56 / N2 / NCFM), this protein is UPF0154 protein LBA1278.